The following is a 565-amino-acid chain: Tetratricopeptide repeat protein 39A (565 aa).

TPR repeat units lie at residues 271-304 (AIFL…QQVW), 461-494 (CLIQ…EKKL), and 502-535 (PNAL…YKVY).

This sequence belongs to the TTC39 family.

In Danio rerio (Zebrafish), this protein is Tetratricopeptide repeat protein 39A (ttc39a).